The chain runs to 214 residues: Pyridoxine/pyridoxamine 5'-phosphate oxidase (214 aa).

Residues 9 to 12 (RRSY) and lysine 68 each bind substrate. FMN is bound by residues 63 to 68 (RVVLLK), 78 to 79 (YT), lysine 85, and glutamine 107. Substrate-binding residues include tyrosine 125, arginine 129, and serine 133. FMN contacts are provided by residues 142–143 (QS) and tryptophan 187. 193-195 (RLH) serves as a coordination point for substrate. Position 197 (arginine 197) interacts with FMN.

Belongs to the pyridoxamine 5'-phosphate oxidase family. In terms of assembly, homodimer. FMN serves as cofactor.

It carries out the reaction pyridoxamine 5'-phosphate + O2 + H2O = pyridoxal 5'-phosphate + H2O2 + NH4(+). The enzyme catalyses pyridoxine 5'-phosphate + O2 = pyridoxal 5'-phosphate + H2O2. The protein operates within cofactor metabolism; pyridoxal 5'-phosphate salvage; pyridoxal 5'-phosphate from pyridoxamine 5'-phosphate: step 1/1. Its pathway is cofactor metabolism; pyridoxal 5'-phosphate salvage; pyridoxal 5'-phosphate from pyridoxine 5'-phosphate: step 1/1. Its function is as follows. Catalyzes the oxidation of either pyridoxine 5'-phosphate (PNP) or pyridoxamine 5'-phosphate (PMP) into pyridoxal 5'-phosphate (PLP). The protein is Pyridoxine/pyridoxamine 5'-phosphate oxidase of Christiangramia forsetii (strain DSM 17595 / CGMCC 1.15422 / KT0803) (Gramella forsetii).